A 449-amino-acid chain; its full sequence is mRNA-capping enzyme subunit alpha (449 aa).

Catalysis depends on lysine 66, which acts as the N6-GMP-lysine intermediate. The disordered stretch occupies residues 405–449 (DERKNGAYQHHSSSFSESRQQPKAEPVAEKKQTEPKYVDDDDWSD). Residues 414 to 423 (HHSSSFSESR) are compositionally biased toward polar residues. Basic and acidic residues predominate over residues 424–442 (QQPKAEPVAEKKQTEPKYV).

Belongs to the eukaryotic GTase family. In terms of assembly, heterodimer. The mRNA-capping enzyme is composed of two separate chains alpha and beta, respectively a mRNA guanylyltransferase and an mRNA 5'-triphosphate monophosphatase.

It is found in the nucleus. The catalysed reaction is a 5'-end diphospho-ribonucleoside in mRNA + GTP + H(+) = a 5'-end (5'-triphosphoguanosine)-ribonucleoside in mRNA + diphosphate. Its function is as follows. Second step of mRNA capping. Transfer of the GMP moiety of GTP to the 5'-end of RNA via an enzyme-GMP covalent reaction intermediate. The protein is mRNA-capping enzyme subunit alpha (CEG1) of Candida glabrata (strain ATCC 2001 / BCRC 20586 / JCM 3761 / NBRC 0622 / NRRL Y-65 / CBS 138) (Yeast).